Here is an 85-residue protein sequence, read N- to C-terminus: Coiled-coil-helix-coiled-coil-helix domain-containing protein 7 (85 aa).

The 43-residue stretch at 13–55 (SNPCLEETDASTKCMDDNRYEKDLCTPYFVKYKNCRKFWNGIM) folds into the CHCH domain. Short sequence motifs (cx9C motif) lie at residues 16–26 (CLEETDASTKC) and 37–47 (CTPYFVKYKNC). Cystine bridges form between C16-C47 and C26-C37.

It belongs to the CHCHD7 family.

Its subcellular location is the mitochondrion intermembrane space. The sequence is that of Coiled-coil-helix-coiled-coil-helix domain-containing protein 7 (chchd7) from Xenopus tropicalis (Western clawed frog).